The following is a 511-amino-acid chain: U3 snoRNP-associated protein-like YAOH (511 aa).

Over residues 1 to 18 (MAPRPRKRVSRPKPRATS) the composition is skewed to basic residues. Residues 1–117 (MAPRPRKRVS…EDEDEGEEAG (117 aa)) are disordered. Composition is skewed to acidic residues over residues 44 to 53 (EDIESEDSDL) and 66 to 80 (DDGE…EQET). The span at 81 to 105 (AGEKKMRIAKELLKKVTDAARRRRE) shows a compositional bias: basic and acidic residues. 7 WD repeats span residues 158–197 (KHRQ…SEKY), 217–256 (KRSK…HIQA), 259–298 (GHRG…YMNC), 301–339 (GHQN…QLLF), 342–380 (PATA…PTHI), 412–451 (SAQS…KGIR), and 457–497 (RLDG…QNGV).

This sequence belongs to the WD repeat RRP9 family.

Its subcellular location is the nucleus. It is found in the nucleolus. Its function is as follows. Component of a nucleolar small nuclear ribonucleoprotein particle (snoRNP) thought to participate in the processing and modification of pre-ribosomal RNA. Essential for embryogenesis. The polypeptide is U3 snoRNP-associated protein-like YAOH (Oryza sativa subsp. japonica (Rice)).